We begin with the raw amino-acid sequence, 360 residues long: Josephin-like protein (360 aa).

In terms of domain architecture, Josephin spans 5–192 (ESKIYHERQR…NQLPLASNYR (188 aa)). Residue C18 is the Nucleophile of the active site. Catalysis depends on H129, which acts as the Proton acceptor.

It carries out the reaction Thiol-dependent hydrolysis of ester, thioester, amide, peptide and isopeptide bonds formed by the C-terminal Gly of ubiquitin (a 76-residue protein attached to proteins as an intracellular targeting signal).. Its function is as follows. May act as a deubiquitinating enzyme. The polypeptide is Josephin-like protein (Arabidopsis thaliana (Mouse-ear cress)).